Reading from the N-terminus, the 1439-residue chain is Myomesin-3 (1439 aa).

Residues 1-57 (MTLPHSPGSAGEPQASQTVQVHRLEHRQEEEQKEERQHSLQMGSSVQRRTYRSSEEE) are disordered. Residues 22–38 (HRLEHRQEEEQKEERQH) are compositionally biased toward basic and acidic residues. Over residues 39-48 (SLQMGSSVQR) the composition is skewed to polar residues. Residues 119–149 (QRLLRQRRDWKALRQRTEEKVREAKELIELC) are a coiled coil. Ig-like C2-type domains lie at 154–246 (PWFW…AKVL) and 269–362 (PSAE…AYVF). Fibronectin type-III domains follow at residues 376–471 (SPLN…TGDY), 504–599 (APTN…LKGK), 605–698 (PPAQ…VKQA), 704–799 (APYD…CKEW), and 806–901 (PPYD…LEDK). 2 Ig-like C2-type domains span residues 1122–1207 (PYFQ…LDLT) and 1336–1425 (AKVV…VTIS).

As to quaternary structure, homodimer. Mainly expressed in slow muscle, extraocular muscle and embryonic/neonatal skeletal muscle (at protein level). Expression in skeletal muscle is fiber type specific, with the highest levels in type IIA fibers (intermediate speed) and lower levels in type I fibers.

It localises to the cytoplasm. The protein resides in the myofibril. Its subcellular location is the sarcomere. It is found in the m line. Its function is as follows. May link the intermediate filament cytoskeleton to the M-disk of the myofibrils in striated muscle. This is Myomesin-3 (Myom3) from Mus musculus (Mouse).